Reading from the N-terminus, the 393-residue chain is 1-deoxy-D-xylulose 5-phosphate reductoisomerase (393 aa).

5 residues coordinate NADPH: T13, G14, S15, I16, and N128. K129 is a binding site for 1-deoxy-D-xylulose 5-phosphate. Position 130 (E130) interacts with NADPH. Position 154 (D154) interacts with Mn(2+). Residues S155, E156, S178, and H201 each coordinate 1-deoxy-D-xylulose 5-phosphate. E156 contacts Mn(2+). G207 contacts NADPH. S214, N219, K220, and E223 together coordinate 1-deoxy-D-xylulose 5-phosphate. Residue E223 coordinates Mn(2+).

The protein belongs to the DXR family. Mg(2+) serves as cofactor. The cofactor is Mn(2+).

It catalyses the reaction 2-C-methyl-D-erythritol 4-phosphate + NADP(+) = 1-deoxy-D-xylulose 5-phosphate + NADPH + H(+). It functions in the pathway isoprenoid biosynthesis; isopentenyl diphosphate biosynthesis via DXP pathway; isopentenyl diphosphate from 1-deoxy-D-xylulose 5-phosphate: step 1/6. Catalyzes the NADPH-dependent rearrangement and reduction of 1-deoxy-D-xylulose-5-phosphate (DXP) to 2-C-methyl-D-erythritol 4-phosphate (MEP). This Acidithiobacillus ferrooxidans (strain ATCC 23270 / DSM 14882 / CIP 104768 / NCIMB 8455) (Ferrobacillus ferrooxidans (strain ATCC 23270)) protein is 1-deoxy-D-xylulose 5-phosphate reductoisomerase.